A 143-amino-acid chain; its full sequence is Hemoglobin subunit alpha (143 aa).

An N-acetylserine modification is found at serine 2. Residues 2-143 (SLSDTDKAVV…LALALSEKYR (142 aa)) form the Globin domain. Histidine 60 contributes to the O2 binding site. Position 89 (histidine 89) interacts with heme b.

It belongs to the globin family. Heterotetramer of two alpha chains and two beta chains. In terms of tissue distribution, red blood cells.

Its function is as follows. Involved in oxygen transport from gills to the various peripheral tissues. The sequence is that of Hemoglobin subunit alpha (hbaa1) from Danio rerio (Zebrafish).